A 432-amino-acid polypeptide reads, in one-letter code: MSTFGHYFRVTTYGESHCKSVGCIVDGVPPGMELTEDDIQPQMTRRRPGQSAITTPRDEKDRVIIQSGTEFGVTLGTPIGMLVMNEDQRPKDYGNKTMDIYPRPSHADWTYLEKYGVKASSGGGRSSARETIGRVAAGAIAEKYLKLAYGVEIVAFVSSVGSEHLFPPTAEHPSPSTNPEFLKLVNSITRETVDSFLPVRCPDAEANKRMEDLITKFRDNHDSIGGTVTCVIRNVPSGLGEPAFDKLEAMLAHAMLSIPATKGFEVGSGFGGCEVPGSIHNDPFVSAENTEIPPSVAASGAARNGIPRPKLTTKTNFSGGIQGGISNGAPIYFRVGFKPAATIGQEQTTATYDGTSEGVLAAKGRHDPSVVPRAVPIVEAMAALVIMDAVLAQQARHTAKSLLPPLKQTINSGKDTVGNGVSENVQESDLAQ.

Catalysis depends on residues His-17, His-106, and Asp-367. Residues Leu-406–Gln-432 form a disordered region. Over residues Gln-408 to Gln-432 the composition is skewed to polar residues.

The protein belongs to the chorismate synthase family. As to quaternary structure, homotetramer.

The enzyme catalyses 5-O-(1-carboxyvinyl)-3-phosphoshikimate = chorismate + phosphate. It catalyses the reaction FMNH2 + NADP(+) = FMN + NADPH + 2 H(+). It functions in the pathway metabolic intermediate biosynthesis; chorismate biosynthesis; chorismate from D-erythrose 4-phosphate and phosphoenolpyruvate: step 7/7. Functionally, bifunctional chorismate synthase and flavin reductase that catalyzes the conversion of 5-enolpyruvylshikimate 3-phosphate (EPSP) to form chorismate, which is the last common intermediate in the synthesis of the three aromatic amino acids phenylalanine, tyrosine and tryptophan. Acts also as a flavin reductase (FR) able to generate reduced flavin mononucleotide in the presence of NADPH. This Neurospora crassa (strain ATCC 24698 / 74-OR23-1A / CBS 708.71 / DSM 1257 / FGSC 987) protein is Chorismate synthase aro-2.